The chain runs to 360 residues: UDP-3-O-acylglucosamine N-acyltransferase (360 aa).

The Proton acceptor role is filled by His-253.

Belongs to the transferase hexapeptide repeat family. LpxD subfamily. In terms of assembly, homotrimer.

It catalyses the reaction a UDP-3-O-[(3R)-3-hydroxyacyl]-alpha-D-glucosamine + a (3R)-hydroxyacyl-[ACP] = a UDP-2-N,3-O-bis[(3R)-3-hydroxyacyl]-alpha-D-glucosamine + holo-[ACP] + H(+). Its pathway is bacterial outer membrane biogenesis; LPS lipid A biosynthesis. Functionally, catalyzes the N-acylation of UDP-3-O-acylglucosamine using 3-hydroxyacyl-ACP as the acyl donor. Is involved in the biosynthesis of lipid A, a phosphorylated glycolipid that anchors the lipopolysaccharide to the outer membrane of the cell. The polypeptide is UDP-3-O-acylglucosamine N-acyltransferase (Burkholderia multivorans (strain ATCC 17616 / 249)).